We begin with the raw amino-acid sequence, 185 residues long: Ribosome-recycling factor (185 aa).

This sequence belongs to the RRF family.

The protein resides in the cytoplasm. Its function is as follows. Responsible for the release of ribosomes from messenger RNA at the termination of protein biosynthesis. May increase the efficiency of translation by recycling ribosomes from one round of translation to another. The protein is Ribosome-recycling factor of Nitrosomonas eutropha (strain DSM 101675 / C91 / Nm57).